A 228-amino-acid chain; its full sequence is Putative adhesin A1I_01215 (228 aa).

The first 22 residues, 1–22, serve as a signal peptide directing secretion; sequence MKKLLLIAATSATVLSSALSFA.

The polypeptide is Putative adhesin A1I_01215 (Rickettsia bellii (strain OSU 85-389)).